Reading from the N-terminus, the 201-residue chain is Casparian strip membrane protein 4 (201 aa).

A disordered region spans residues 1-23 (MEGKAAVTTSTEHGDGEASRTAA). At 1–41 (MEGKAAVTTSTEHGDGEASRTAARTVVSGSSRGGAASRALS) the chain is on the cytoplasmic side. The chain crosses the membrane as a helical span at residues 42–62 (VADLILRVVAVVAIVDSAIAM). Over 63–87 (GTTNQTLPFFTQFLRFKAQYSDLPT) the chain is Extracellular. Asparagine 66 carries an N-linked (GlcNAc...) asparagine glycan. A helical transmembrane segment spans residues 88 to 108 (LTLFVVANSAVTAYLVLSIPL). Over 109-122 (SVVHIIRSRASYSR) the chain is Cytoplasmic. A helical transmembrane segment spans residues 123–143 (LVLIFLDSVMLALVAAVASAS). The Extracellular segment spans residues 144 to 172 (AAIVYLAHKGNVRANWFAVCQQFDSFCER). The helical transmembrane segment at 173–193 (ISGPLIGSFAAMAVLLLLVLL) threads the bilayer. Residues 194-201 (SAAALARR) are Cytoplasmic-facing.

It belongs to the Casparian strip membrane proteins (CASP) family. In terms of assembly, homodimer and heterodimers.

The protein localises to the cell membrane. Functionally, regulates membrane-cell wall junctions and localized cell wall deposition. Required for establishment of the Casparian strip membrane domain (CSD) and the subsequent formation of Casparian strips, a cell wall modification of the root endodermis that determines an apoplastic barrier between the intraorganismal apoplasm and the extraorganismal apoplasm and prevents lateral diffusion. The polypeptide is Casparian strip membrane protein 4 (Oryza sativa subsp. japonica (Rice)).